The following is a 938-amino-acid chain: Isoleucine--tRNA ligase (938 aa).

The short motif at 58–68 (PYANGSIHIGH) is the 'HIGH' region element. Position 183 is an N6-acetyllysine (K183). Position 561 (E561) interacts with L-isoleucyl-5'-AMP. The short motif at 602–606 (KMSKS) is the 'KMSKS' region element. K605 serves as a coordination point for ATP. Zn(2+)-binding residues include C901, C904, C921, and C924.

It belongs to the class-I aminoacyl-tRNA synthetase family. IleS type 1 subfamily. As to quaternary structure, monomer. Zn(2+) is required as a cofactor.

It is found in the cytoplasm. The catalysed reaction is tRNA(Ile) + L-isoleucine + ATP = L-isoleucyl-tRNA(Ile) + AMP + diphosphate. In terms of biological role, catalyzes the attachment of isoleucine to tRNA(Ile). As IleRS can inadvertently accommodate and process structurally similar amino acids such as valine, to avoid such errors it has two additional distinct tRNA(Ile)-dependent editing activities. One activity is designated as 'pretransfer' editing and involves the hydrolysis of activated Val-AMP. The other activity is designated 'posttransfer' editing and involves deacylation of mischarged Val-tRNA(Ile). In Escherichia coli O45:K1 (strain S88 / ExPEC), this protein is Isoleucine--tRNA ligase.